The sequence spans 128 residues: Large ribosomal subunit protein bL17 (128 aa).

The protein belongs to the bacterial ribosomal protein bL17 family. As to quaternary structure, part of the 50S ribosomal subunit. Contacts protein L32.

The polypeptide is Large ribosomal subunit protein bL17 (Pseudomonas savastanoi pv. phaseolicola (strain 1448A / Race 6) (Pseudomonas syringae pv. phaseolicola (strain 1448A / Race 6))).